A 163-amino-acid chain; its full sequence is Peptide methionine sulfoxide reductase MsrA (163 aa).

C10 is a catalytic residue.

Belongs to the MsrA Met sulfoxide reductase family.

It catalyses the reaction L-methionyl-[protein] + [thioredoxin]-disulfide + H2O = L-methionyl-(S)-S-oxide-[protein] + [thioredoxin]-dithiol. It carries out the reaction [thioredoxin]-disulfide + L-methionine + H2O = L-methionine (S)-S-oxide + [thioredoxin]-dithiol. Its function is as follows. Has an important function as a repair enzyme for proteins that have been inactivated by oxidation. Catalyzes the reversible oxidation-reduction of methionine sulfoxide in proteins to methionine. This is Peptide methionine sulfoxide reductase MsrA from Vesicomyosocius okutanii subsp. Calyptogena okutanii (strain HA).